The primary structure comprises 513 residues: GMP synthase [glutamine-hydrolyzing] (513 aa).

One can recognise a Glutamine amidotransferase type-1 domain in the interval 7-198; it reads LIVVVDFGGQ…LFNIAGCRGD (192 aa). C84 functions as the Nucleophile in the catalytic mechanism. Residues H172 and E174 contribute to the active site. Residues 199–388 form the GMPS ATP-PPase domain; it reads WTTESFITRQ…LGVPEEIVGR (190 aa). 226–232 is a binding site for ATP; that stretch reads SGGVDSS.

As to quaternary structure, homodimer.

The catalysed reaction is XMP + L-glutamine + ATP + H2O = GMP + L-glutamate + AMP + diphosphate + 2 H(+). The protein operates within purine metabolism; GMP biosynthesis; GMP from XMP (L-Gln route): step 1/1. Functionally, catalyzes the synthesis of GMP from XMP. This Symbiobacterium thermophilum (strain DSM 24528 / JCM 14929 / IAM 14863 / T) protein is GMP synthase [glutamine-hydrolyzing].